The chain runs to 139 residues: Flagellar basal body rod protein FlgB (139 aa).

It belongs to the flagella basal body rod proteins family. As to quaternary structure, the basal body constitutes a major portion of the flagellar organelle and consists of a number of rings mounted on a central rod. In Gram-negative bacteria, at least four rings, L, P, S and M are present, whereas Gram-positive bacteria lack the L and P rings. The rod consists of about 26 subunits of FlgG in the distal portion, and FlgB, FlgC and FlgF build up the proximal portion of the rod with about 6 subunits each. Rod assembly occurs by export via the flagellum-specific pathway of its constituent proteins and by their incorporation into the rod structure in the probable order of FlgB, FlgC, FlgF and FlgG. Another protein, FliE, also assembles onto the stable rod structure.

It localises to the bacterial flagellum basal body. Structural component of flagellum, the bacterial motility apparatus. Part of the rod structure of flagellar basal body. This Proteus mirabilis protein is Flagellar basal body rod protein FlgB.